The sequence spans 173 residues: Lipoprotein signal peptidase (173 aa).

Transmembrane regions (helical) follow at residues 14–34 (LAWL…KYYF), 44–64 (IIVI…AAFS), 72–92 (WQRW…VVWL), and 98–118 (DDTW…GNLY). Residues D128 and D147 contribute to the active site. The helical transmembrane segment at 139–159 (YFPAFNVADSAITVGAIMLAL) threads the bilayer.

Belongs to the peptidase A8 family.

It is found in the cell inner membrane. It carries out the reaction Release of signal peptides from bacterial membrane prolipoproteins. Hydrolyzes -Xaa-Yaa-Zaa-|-(S,diacylglyceryl)Cys-, in which Xaa is hydrophobic (preferably Leu), and Yaa (Ala or Ser) and Zaa (Gly or Ala) have small, neutral side chains.. It functions in the pathway protein modification; lipoprotein biosynthesis (signal peptide cleavage). In terms of biological role, this protein specifically catalyzes the removal of signal peptides from prolipoproteins. The polypeptide is Lipoprotein signal peptidase (Pseudomonas syringae pv. tomato (strain ATCC BAA-871 / DC3000)).